The sequence spans 445 residues: Protein phosphatase 2C 53 (445 aa).

The PPM-type phosphatase domain occupies 124–435 (LWGLESICGR…DNITVVVIDL (312 aa)). 4 residues coordinate Mn(2+): D180, G181, D362, and D426.

It belongs to the PP2C family. Interacts with PYL10, SAPK8 and SAPK10. Binding to PYL10 is dependent on the presence of abscisic acid (ABA). Interacts with PYL3, PYL5, PYL9 and PYL10. Binding to PYL9 and PYL10 is dependent on the presence of ABA. Mg(2+) serves as cofactor. The cofactor is Mn(2+). As to expression, expressed in leaf blades, leaf sheaths and lamina joints. Expressed at low levels in roots, stems, flowers and panicles.

The protein resides in the cytoplasm. Its subcellular location is the cytosol. The protein localises to the nucleus. The catalysed reaction is O-phospho-L-seryl-[protein] + H2O = L-seryl-[protein] + phosphate. The enzyme catalyses O-phospho-L-threonyl-[protein] + H2O = L-threonyl-[protein] + phosphate. Its activity is regulated as follows. Repressed by abscisic acid-bound PYL1. In terms of biological role, protein phosphatase that acts as a negative regulator of abscisic acid (ABA) signaling. Involved in the regulation of root architecture development and drought resistance. Can dephosphorylate SAPK8 and SAPK10 in vitro. Together with PYL10, SAPK8 and SAPK10, may form an ABA signaling module involved in stress response. This chain is Protein phosphatase 2C 53, found in Oryza sativa subsp. japonica (Rice).